A 395-amino-acid chain; its full sequence is MVMGTPSSLDEIRKAQRADGPAGILAIGTANPANHVIQAEYPDYYFRITNSEHMTDLKEKFKRMCDKSTIRKRHMHLTEEFLKDNPNMCAYMAPSLDARQDIVVVEVPKLGKEAAVKAIKEWGQPKSKITHVVFCTTSGVDMPGADYQLTKLLGLRPSVKRLMMYQQGCFAGGTVLRLAKDLAENNRGARVLVVCSEITAVTFRGPSDTHLDSLVGQALFSDGAAAIIVGSDPDTSVGEKPIFEMVSAAQTILPDSDGAIDGHLREVGLTFHLLKDVPGLISKNIEKSLDEAFKPLGISDWNSLFWIAHPGGPAILDDVEKKLGLKAEKMRATRHVLSEYGNMSSACVLFILDEMRRKSKEDGVATTGEGLEWGVLFGFGPGLTVETVVLHSVPV.

At V2 the chain carries N-acetylvaline. C169 is a catalytic residue.

It belongs to the thiolase-like superfamily. Chalcone/stilbene synthases family.

The catalysed reaction is (E)-4-coumaroyl-CoA + 3 malonyl-CoA + 3 H(+) = 2',4,4',6'-tetrahydroxychalcone + 3 CO2 + 4 CoA. It functions in the pathway secondary metabolite biosynthesis; flavonoid biosynthesis. Functionally, the primary product of this enzyme is 4,2',4',6'-tetrahydroxychalcone (also termed naringenin-chalcone or chalcone) which can under specific conditions spontaneously isomerize into naringenin. This is Chalcone synthase 3 (CHS3) from Sinapis alba (White mustard).